The sequence spans 488 residues: Regulatory protein ViaA (488 aa).

It belongs to the ViaA family. Homodimer. Interacts with RavA.

Its subcellular location is the cytoplasm. Component of the RavA-ViaA chaperone complex, which may act on the membrane to optimize the function of some of the respiratory chains. ViaA stimulates the ATPase activity of RavA. The protein is Regulatory protein ViaA of Yersinia pseudotuberculosis serotype O:1b (strain IP 31758).